Here is a 329-residue protein sequence, read N- to C-terminus: UDP-sugar transporter sqv-7 (329 aa).

Transmembrane regions (helical) follow at residues 15-34 (SAVF…KILL), 41-63 (SFLF…AKMF), 86-108 (YFFN…FTVL), 129-151 (SKAV…IYDL), 155-174 (ALGY…LGVY), 187-209 (YGLM…QYTG), 224-246 (TSSV…YSLV), 253-275 (SALT…GMFS), and 280-302 (VFQW…YTYV).

This sequence belongs to the TPT transporter family. SLC35D subfamily.

It localises to the golgi apparatus membrane. Its function is as follows. Acts as a transporter of UDP-glucuronic acid (UDP-GlcA), UDP-N-acetylgalactosamine (UDP-GalNAc) and UDP-galactose (UDP-Gal) from the cytoplasm into the Golgi lumen. Involved in the biosynthesis of glycoconjugates that play a pivotal role in development. Involved in the synthesis of chondroitin sulfate and heparan sulfate proteoglycans. Required for embryonic development. Involved in vulva epithelium invagination and embryonic development. Involved in the directed migration of hermaphrodite-specific neurons. This chain is UDP-sugar transporter sqv-7 (sqv-7), found in Caenorhabditis elegans.